A 549-amino-acid polypeptide reads, in one-letter code: MCAAEVDRHVAQRYLIKRRLGKGAYGIVWKAMDRRTGEVVAIKKIFDAFRDQIDAQRTFREIMLLKEFGGHPNIIRLLDVIPAKNDRDIYLVFESMDTDLNAVIQKGRLLKDIHKRCIFYQLLRATKFIHSGRVIHRDQKPANVLLDSACRVKLCDFGLARSLGDLPEGPGGQALTEYVATRWYRAPEVLLSSRWYTPGVDMWSLGCILGEMLRGQPLFPGTSTFHQLELILKTIPLPSMEELQDLGSDYSALILQNLGSRPQQTLDALLPPDTPPEALDLLKRLLAFAPDKRLSAEQALQHPYVQRFHCPDREWARESDVRLPVHEGDQLSAPEYRKRLYQIILEQSGNSRSPREEGLGVVASRAELRASPARTQSLKSGVLPQVPAETPARKRGPKPPRSPGHDPEHVEVRRQSSDPLFQLPPPGRGERPPGATGQPPSAPSGVKTQVRAMAPSLTSQAEAQAANQALIRSDPARGGGPRAVGARRVPSRLPREAPEPRPGRRMFGISVSQGAQGAARAALGGYSQAYGTVCRSALGRLPLLPGPRA.

The ubiquitin-conjugating stretch occupies residues 1-20; that stretch reads MCAAEVDRHVAQRYLIKRRL. The 292-residue stretch at 14–305 folds into the Protein kinase domain; that stretch reads YLIKRRLGKG…AEQALQHPYV (292 aa). ATP is bound by residues 20 to 28 and Lys-43; that span reads LGKGAYGIV. The active-site Proton acceptor is the Asp-138. Residue Thr-176 is modified to Phosphothreonine. Residues 176-178 carry the TXY motif; the sequence is TEY. Tyr-178 bears the Phosphotyrosine mark. Residues 266 to 286 form a necessary to interact with ESRRA, to regulate its subcellular localization and to inhibit its transcriptional activity region; the sequence is LDALLPPDTPPEALDLLKRLL. The tract at residues 301–382 is requires for interaction with GABARAP, MAP1LC3B AND GABARAPL1; the sequence is QHPYVQRFHC…ARTQSLKSGV (82 aa). Residues 370 to 507 are disordered; sequence ASPARTQSLK…PEPRPGRRMF (138 aa). PXXXP motif repeat units follow at residues 380-384 and 387-391; these read SGVLP and PAETP. PXXXP motif; regulates binding with chromatin and interaction with PCNA repeat units lie at residues 395 to 399 and 403 to 407; these read RGPKP and PGHDP. Positions 403-416 are enriched in basic and acidic residues; that stretch reads PGHDPEHVEVRRQS. Arg-451 is modified (omega-N-methylarginine). A compositionally biased stretch (polar residues) spans 456-467; the sequence is SLTSQAEAQAAN. Residues 483–492 show a composition bias toward low complexity; it reads AVGARRVPSR. The segment covering 493–502 has biased composition (basic and acidic residues); sequence LPREAPEPRP.

Belongs to the protein kinase superfamily. CMGC Ser/Thr protein kinase family. MAP kinase subfamily. Interacts with TGFB1I1. Interacts with CSK/c-Src, ABL1 and RET. Interacts with GABARAP, MAP1LC3B and GABARAPL1; controls, in a kinase-dependent fashion, both basal and starvation-induced autophagy. Interacts with ESRRA; promotes re-localization of ESRRA to the cytoplasm through a XPO1-dependent mechanism then inhibits ESRRA transcriptional activity. Interacts with PCNA; the interaction is chromatin binding- and kinase activity-dependent and prevents MDM2-mediated PCNA destruction by inhibiting the association of PCNA with MDM2. Interacts with DVL2. Interacts with CLIC3; MAPK15 does not phosphorylates CLIC3. Autophosphorylated on Thr-176 and Tyr-178; activates the enzyme. Post-translationally, ubiquitinated. Ubiquitination may allow its tight kinase activity regulation and rapid turnover. May be ubiquitinated by a SCF E3 ligase. In terms of tissue distribution, expressed at all stages of oocyte meiotic maturation.

It localises to the cytoplasm. It is found in the cytoskeleton. Its subcellular location is the cilium basal body. The protein localises to the cell junction. The protein resides in the tight junction. It localises to the microtubule organizing center. It is found in the centrosome. Its subcellular location is the centriole. The protein localises to the cytoplasmic vesicle. The protein resides in the autophagosome. It localises to the golgi apparatus. It is found in the nucleus. Its subcellular location is the spindle. The catalysed reaction is L-seryl-[protein] + ATP = O-phospho-L-seryl-[protein] + ADP + H(+). The enzyme catalyses L-threonyl-[protein] + ATP = O-phospho-L-threonyl-[protein] + ADP + H(+). Activated by threonine and tyrosine phosphorylation. Inhibited by dual specificity phosphatases, such as DUSP1. Phosphorylation and activation in response to DNA damaging agents, serum stimulation. Constitutively activated when phosphorylated on Tyr-178. Activity depends on the relative rates of MAPK15 autophosphorylation and dephosphorylation by PTPN1. Atypical MAPK protein that regulates several process such as autophagy, ciliogenesis, protein trafficking/secretion and genome integrity, in a kinase activity-dependent manner. Controls both, basal and starvation-induced autophagy throught its interaction with GABARAP, MAP1LC3B and GABARAPL1 leading to autophagosome formation, SQSTM1 degradation and reduced MAP1LC3B inhibitory phosphorylation. Regulates primary cilium formation and the localization of ciliary proteins involved in cilium structure, transport, and signaling. Prevents the relocation of the sugar-adding enzymes from the Golgi to the endoplasmic reticulum, thereby restricting the production of sugar-coated proteins. Upon amino-acid starvation, mediates transitional endoplasmic reticulum site disassembly and inhibition of secretion. Binds to chromatin leading to MAPK15 activation and interaction with PCNA, that which protects genomic integrity by inhibiting MDM2-mediated degradation of PCNA. Regulates DA transporter (DAT) activity and protein expression via activation of RhoA. In response to H(2)O(2) treatment phosphorylates ELAVL1, thus preventing it from binding to the PDCD4 3'UTR and rendering the PDCD4 mRNA accessible to miR-21 and leading to its degradation and loss of protein expression. Also functions in a kinase activity-independent manner as a negative regulator of growth. Phosphorylates in vitro FOS and MBP. During oocyte maturation, plays a key role in the microtubule organization and meiotic cell cycle progression in oocytes, fertilized eggs, and early embryos. Interacts with ESRRA promoting its re-localization from the nucleus to the cytoplasm and then prevents its transcriptional activity. In Mus musculus (Mouse), this protein is Mitogen-activated protein kinase 15.